Here is a 415-residue protein sequence, read N- to C-terminus: Very late expression factor 1 (415 aa).

The 187-residue stretch at 171 to 357 (REIINTILDC…DESDDNDEDD (187 aa)) folds into the Tyr recombinase domain. Catalysis depends on residues R214, K242, R307, and H330. Residues 339–415 (YLNKYDVGVD…GDDADLLSFN (77 aa)) are disordered. The active-site O-(3'-phospho-DNA)-tyrosine intermediate is Y343. Over residues 346 to 363 (GVDESDDNDEDDDDDEND) the composition is skewed to acidic residues. The span at 375–404 (NISNYDINNSSSGNSSSNNTSGNDFNNNIS) shows a compositional bias: low complexity.

Belongs to the 'phage' integrase family.

Its function is as follows. Involved in very late gene activation. The protein is Very late expression factor 1 (VLF-1) of Heliothis zea nuclear polyhedrosis virus (HzSNPV).